The following is a 176-amino-acid chain: RNA pyrophosphohydrolase (176 aa).

The region spanning Gly-6 to Lys-149 is the Nudix hydrolase domain. The Nudix box signature appears at Gly-38–Gly-59.

It belongs to the Nudix hydrolase family. RppH subfamily. A divalent metal cation is required as a cofactor.

Functionally, accelerates the degradation of transcripts by removing pyrophosphate from the 5'-end of triphosphorylated RNA, leading to a more labile monophosphorylated state that can stimulate subsequent ribonuclease cleavage. This chain is RNA pyrophosphohydrolase, found in Salmonella paratyphi C (strain RKS4594).